Reading from the N-terminus, the 376-residue chain is Protein-glutamate methylesterase/protein-glutamine glutaminase (376 aa).

The Response regulatory domain maps to 4–121 (KVLVVDDSSF…ARNRDEAVSL (118 aa)). Aspartate 55 is subject to 4-aspartylphosphate. The segment at 142-161 (SSQSTSTVESRTATTRTATS) is disordered. The span at 145–161 (STSTVESRTATTRTATS) shows a compositional bias: low complexity. A CheB-type methylesterase domain is found at 183–376 (TGKKYQLTAI…ERMLVEVGLK (194 aa)). Active-site residues include serine 195, histidine 222, and aspartate 318.

This sequence belongs to the CheB family. Phosphorylated by CheA. Phosphorylation of the N-terminal regulatory domain activates the methylesterase activity.

Its subcellular location is the cytoplasm. The catalysed reaction is [protein]-L-glutamate 5-O-methyl ester + H2O = L-glutamyl-[protein] + methanol + H(+). The enzyme catalyses L-glutaminyl-[protein] + H2O = L-glutamyl-[protein] + NH4(+). Functionally, involved in chemotaxis. Part of a chemotaxis signal transduction system that modulates chemotaxis in response to various stimuli. Catalyzes the demethylation of specific methylglutamate residues introduced into the chemoreceptors (methyl-accepting chemotaxis proteins or MCP) by CheR. Also mediates the irreversible deamidation of specific glutamine residues to glutamic acid. This is Protein-glutamate methylesterase/protein-glutamine glutaminase from Aliivibrio fischeri (strain ATCC 700601 / ES114) (Vibrio fischeri).